Consider the following 492-residue polypeptide: Zinc finger protein GLIS2 (492 aa).

The interval 49-101 (VITPICSSPPPGFRYRDGDSPPFSSPPIVDLSLSPPSGTDSPSRSSLSPDRAA) is disordered. Residues 69 to 129 (PPFSSPPIVD…SPFQFFLPLG (61 aa)) are transcription activation. Low complexity predominate over residues 82 to 97 (SPPSGTDSPSRSSLSP). Positions 138 to 161 (MFMSPPKENRLSLEFTEQKQLVCQ) are transcription repression. Residues 158–183 (LVCQWAKCNRLFELLQELVDHVNDFH) form a C2H2-type 1 zinc finger. The segment at 192–219 (YCCHWEGCARRGRGFNARYKMLIHIRTH) adopts a C2H2-type 2; degenerate zinc-finger fold. 3 consecutive C2H2-type zinc fingers follow at residues 225–247 (HCCPTCHKSFSRLENLKIHNRSH), 253–277 (YMCPYEGCNKRYSNSSDRFKHTRTH), and 283–307 (YYCKMPGCQKRYTDPSSLRKHIKAH). Basic and acidic residues predominate over residues 423 to 444 (VENEKRPKGQRGDSSERTDGSK). Positions 423–450 (VENEKRPKGQRGDSSERTDGSKLRPGSI) are disordered.

This sequence belongs to the GLI C2H2-type zinc-finger protein family.

It localises to the nucleus speckle. It is found in the cytoplasm. Can act either as a transcription repressor or as a transcription activator, depending on the cell context. May be involved in neuron differentiation. The sequence is that of Zinc finger protein GLIS2 (glis2) from Xenopus laevis (African clawed frog).